The chain runs to 151 residues: FAD synthase (151 aa).

ATP is bound by residues 21–22, 26–29, and aspartate 104; these read TF and HPGH.

It belongs to the archaeal FAD synthase family. As to quaternary structure, homodimer. A divalent metal cation serves as cofactor.

It carries out the reaction FMN + ATP + H(+) = FAD + diphosphate. Its pathway is cofactor biosynthesis; FAD biosynthesis; FAD from FMN: step 1/1. Its function is as follows. Catalyzes the transfer of the AMP portion of ATP to flavin mononucleotide (FMN) to produce flavin adenine dinucleotide (FAD) coenzyme. The sequence is that of FAD synthase from Methanosarcina mazei (strain ATCC BAA-159 / DSM 3647 / Goe1 / Go1 / JCM 11833 / OCM 88) (Methanosarcina frisia).